The sequence spans 464 residues: MTLRLFDTETRALRDFAPLAPGHASVYLCGATVQGDPHIGHVRSGVAFDVLRRWLLAHDYDVAFVRNVTDIEDKILNKAAEAGRPWWEWAATFERSFTWAYQQLGVLPPSVEPRATGHITQMVEMMQRLIDNGHAYAAGGDVYFDVRSYPRYGSLSGHKLDDVHQGESAGECKRDPRDFTLWKAEKPGEPSWPTPWGRGRPGWHLECSAMAEFYLGAAFDIHCGGLDLVFPHHENEIAQAKCAGDDFAQYWLHNGWVTMGGEKMSKSLGNVLSVPNVLKKVRPQELRYYLGSAHYRSMLEYSDTALDEGAAAYRRIESFVMRTQERAGEVTIGRWTDAFARALDDDLAVPAALAEVHGKVREGNIALDGGDLEGARAIASQVRAMLGILGVDPLDEHWTQETADASAATDALDVLVRAELERRQTARAEKNWAVADEVRDRLIRAGIEVTDTPNGPEWSLKAGQ.

Cysteine 29 serves as a coordination point for Zn(2+). The short motif at 31–41 (ATVQGDPHIGH) is the 'HIGH' region element. Positions 207, 232, and 236 each coordinate Zn(2+). A 'KMSKS' region motif is present at residues 263–267 (KMSKS). Residue lysine 266 coordinates ATP.

It belongs to the class-I aminoacyl-tRNA synthetase family. In terms of assembly, monomer. Requires Zn(2+) as cofactor.

It is found in the cytoplasm. The enzyme catalyses tRNA(Cys) + L-cysteine + ATP = L-cysteinyl-tRNA(Cys) + AMP + diphosphate. The polypeptide is Cysteine--tRNA ligase (Rhodococcus opacus (strain B4)).